Consider the following 386-residue polypeptide: Diels-Alderase phm7 (386 aa).

The segment at 1–223 (MSEPTSSSSL…MVRGWSARPW (223 aa)) is beta-sandwich motif. 3 residues coordinate substrate: Glu-51, Asn-84, and Lys-356. Residues 223–386 (WPTFMNDAYY…FGGQLQIPVP (164 aa)) are beta-barrel motif.

Belongs to the Diels-Alderase family.

Its pathway is secondary metabolite biosynthesis. Its activity is regulated as follows. 3-aminomethyl-p-menthane which is similar to the phomasetin substructure, dose-dependently inhibits phm7 activity in vitro and production of phomasetin in the fungus. Its function is as follows. Diels-Alderase; part of the gene cluster that mediates the biosynthesis of the trans-fused decalin-containing tetramic acid phomasetin, the stereochemical opposite of the HIV-1 integrase inhibitor equisetin. The PKS module of phm1 together with the enoylreductase phm4 catalyze the formation of the polyketide unit which is then conjugated to L-serine by the condensation domain of the phm1 NRPS module. Activity of the Dieckmann cyclase domain (RED) of phm1 results in release of the Dieckmann product intermediate. The Diels-Alderase phm7 then uses the Dieckmann product of phm1 as substrate and catalyzes the Diels-Alder cycloaddition to form the decalin ring of N-desmethylphomasetin. N-desmethylphomasetin is further methylated to phomasetin by the methyltransferase phm5. This Pyrenochaetopsis sp protein is Diels-Alderase phm7.